The following is a 155-amino-acid chain: D-aminoacyl-tRNA deacylase (155 aa).

The short motif at 137–138 (GP) is the Gly-cisPro motif, important for rejection of L-amino acids element.

This sequence belongs to the DTD family. As to quaternary structure, homodimer.

The protein localises to the cytoplasm. It catalyses the reaction glycyl-tRNA(Ala) + H2O = tRNA(Ala) + glycine + H(+). The enzyme catalyses a D-aminoacyl-tRNA + H2O = a tRNA + a D-alpha-amino acid + H(+). An aminoacyl-tRNA editing enzyme that deacylates mischarged D-aminoacyl-tRNAs. Also deacylates mischarged glycyl-tRNA(Ala), protecting cells against glycine mischarging by AlaRS. Acts via tRNA-based rather than protein-based catalysis; rejects L-amino acids rather than detecting D-amino acids in the active site. By recycling D-aminoacyl-tRNA to D-amino acids and free tRNA molecules, this enzyme counteracts the toxicity associated with the formation of D-aminoacyl-tRNA entities in vivo and helps enforce protein L-homochirality. This chain is D-aminoacyl-tRNA deacylase, found in Roseiflexus sp. (strain RS-1).